The primary structure comprises 380 residues: Kappa-type opioid receptor (380 aa).

Over 1-57 (MGRRRQGPAQPASELPARNACLLPNGSAWLPGWAEPDGNGSAGPQDEQLEPAHISPA) the chain is Extracellular. N-linked (GlcNAc...) asparagine glycans are attached at residues Asn25 and Asn39. Residues 58 to 85 (IPVIITAVYSVVFVVGLVGNSLVMFVII) form a helical membrane-spanning segment. Residues 86–95 (RYTKMKTATN) are Cytoplasmic-facing. The chain crosses the membrane as a helical span at residues 96–119 (IYIFNLALADALVTTTMPFQSTVY). The Extracellular portion of the chain corresponds to 120–132 (LMNSWPFGDVLCK). The cysteines at positions 131 and 210 are disulfide-linked. The chain crosses the membrane as a helical span at residues 133–154 (IVISIDYYNMFTSIFTLTMMSV). Over 155–173 (DRYIAVCHPVKALDFRTPL) the chain is Cytoplasmic. A helical transmembrane segment spans residues 174–196 (KAKIINICIWLLSSSVGISAIIL). Over 197–222 (GGTKVREDVDIIECSLQFPDDDYSWW) the chain is Extracellular. Residues 223–247 (DLFMKICVFVFAFVIPVLIIIVCYT) form a helical membrane-spanning segment. At 248–274 (LMILRLKSVRLLSGSREKDRNLRRITR) the chain is on the cytoplasmic side. Residues 275 to 296 (LVLVVVAVFIICWTPIHIFILV) form a helical membrane-spanning segment. The Extracellular segment spans residues 297-311 (EALGSTSHSTAALSS). Residues 312 to 333 (YYFCIALGYTNSSLNPILYAFL) traverse the membrane as a helical segment. The Cytoplasmic portion of the chain corresponds to 334-380 (DENFKRCFRDFCFPIKMRMERQSTSRVRNTVQDPAYMRNVDGVNKPV). Cys345 carries S-palmitoyl cysteine lipidation.

Belongs to the G-protein coupled receptor 1 family. In terms of assembly, interacts with NHERF1. Interacts with GABARAPL1.

Its subcellular location is the cell membrane. Its function is as follows. G-protein coupled opioid receptor that functions as a receptor for endogenous alpha-neoendorphins and dynorphins, but has low affinity for beta-endorphins. Also functions as a receptor for various synthetic opioids and for the psychoactive diterpene salvinorin A. Ligand binding causes a conformation change that triggers signaling via guanine nucleotide-binding proteins (G proteins) and modulates the activity of down-stream effectors, such as adenylate cyclase. Signaling leads to the inhibition of adenylate cyclase activity. Inhibits neurotransmitter release by reducing calcium ion currents and increasing potassium ion conductance. Plays a role in the perception of pain. Plays a role in mediating reduced physical activity upon treatment with synthetic opioids. Plays a role in the regulation of salivation in response to synthetic opioids. May play a role in arousal and regulation of autonomic and neuroendocrine functions. This chain is Kappa-type opioid receptor (OPRK1), found in Cavia porcellus (Guinea pig).